Here is a 42-residue protein sequence, read N- to C-terminus: Photosystem II reaction center protein J (42 aa).

A helical membrane pass occupies residues 10–30 (IPLWLVGTVAGTAAIGLLGIF).

It belongs to the PsbJ family. PSII is composed of 1 copy each of membrane proteins PsbA, PsbB, PsbC, PsbD, PsbE, PsbF, PsbH, PsbI, PsbJ, PsbK, PsbL, PsbM, PsbT, PsbX, PsbY, PsbZ, Psb30/Ycf12, at least 3 peripheral proteins of the oxygen-evolving complex and a large number of cofactors. It forms dimeric complexes.

It localises to the plastid. The protein resides in the chloroplast thylakoid membrane. Its function is as follows. One of the components of the core complex of photosystem II (PSII). PSII is a light-driven water:plastoquinone oxidoreductase that uses light energy to abstract electrons from H(2)O, generating O(2) and a proton gradient subsequently used for ATP formation. It consists of a core antenna complex that captures photons, and an electron transfer chain that converts photonic excitation into a charge separation. This chain is Photosystem II reaction center protein J, found in Pleurastrum terricola (Filamentous green alga).